A 320-amino-acid chain; its full sequence is o-succinylbenzoate synthase (320 aa).

K133 serves as the catalytic Proton donor. 3 residues coordinate Mg(2+): D161, E190, and D213. K235 functions as the Proton acceptor in the catalytic mechanism.

The protein belongs to the mandelate racemase/muconate lactonizing enzyme family. MenC type 1 subfamily. Requires a divalent metal cation as cofactor.

It catalyses the reaction (1R,6R)-6-hydroxy-2-succinyl-cyclohexa-2,4-diene-1-carboxylate = 2-succinylbenzoate + H2O. Its pathway is quinol/quinone metabolism; 1,4-dihydroxy-2-naphthoate biosynthesis; 1,4-dihydroxy-2-naphthoate from chorismate: step 4/7. The protein operates within quinol/quinone metabolism; menaquinone biosynthesis. Its function is as follows. Converts 2-succinyl-6-hydroxy-2,4-cyclohexadiene-1-carboxylate (SHCHC) to 2-succinylbenzoate (OSB). This chain is o-succinylbenzoate synthase, found in Escherichia coli O139:H28 (strain E24377A / ETEC).